A 111-amino-acid polypeptide reads, in one-letter code: Ribosome-binding factor A (111 aa).

Belongs to the RbfA family. Monomer. Binds 30S ribosomal subunits, but not 50S ribosomal subunits or 70S ribosomes.

The protein resides in the cytoplasm. One of several proteins that assist in the late maturation steps of the functional core of the 30S ribosomal subunit. Associates with free 30S ribosomal subunits (but not with 30S subunits that are part of 70S ribosomes or polysomes). Required for efficient processing of 16S rRNA. May interact with the 5'-terminal helix region of 16S rRNA. The polypeptide is Ribosome-binding factor A (Helicobacter acinonychis (strain Sheeba)).